Here is a 57-residue protein sequence, read N- to C-terminus: UPF0391 membrane protein Smed_4051 (57 aa).

2 consecutive transmembrane segments (helical) span residues 4-24 (WALIFFVISLIAGFLGFSGIS) and 33-53 (ILFYIAVIIFLVFLVLALAVG).

The protein belongs to the UPF0391 family.

The protein resides in the cell membrane. The protein is UPF0391 membrane protein Smed_4051 of Sinorhizobium medicae (strain WSM419) (Ensifer medicae).